Reading from the N-terminus, the 102-residue chain is Small ribosomal subunit protein uS10 (102 aa).

The protein belongs to the universal ribosomal protein uS10 family. Part of the 30S ribosomal subunit.

Its function is as follows. Involved in the binding of tRNA to the ribosomes. This chain is Small ribosomal subunit protein uS10, found in Dehalococcoides mccartyi (strain ATCC BAA-2100 / JCM 16839 / KCTC 5957 / BAV1).